Reading from the N-terminus, the 239-residue chain is N-glycosylase/DNA lyase (239 aa).

The 8-oxoguanine site is built by Gln-24, Ser-51, and Trp-62. The helix-hairpin-helix stretch occupies residues Glu-118–Arg-182. Lys-142 functions as the Schiff-base intermediate with DNA in the catalytic mechanism. 2 residues coordinate 8-oxoguanine: Phe-146 and Pro-172. Asp-174 is a catalytic residue. Residues Asp-208 and Trp-212 each contribute to the 8-oxoguanine site.

It belongs to the archaeal N-glycosylase/DNA lyase (AGOG) family.

It carries out the reaction 2'-deoxyribonucleotide-(2'-deoxyribose 5'-phosphate)-2'-deoxyribonucleotide-DNA = a 3'-end 2'-deoxyribonucleotide-(2,3-dehydro-2,3-deoxyribose 5'-phosphate)-DNA + a 5'-end 5'-phospho-2'-deoxyribonucleoside-DNA + H(+). Functionally, DNA repair enzyme that is part of the base excision repair (BER) pathway; protects from oxidative damage by removing the major product of DNA oxidation, 8-oxoguanine (GO), from single- and double-stranded DNA substrates. This is N-glycosylase/DNA lyase from Pyrococcus horikoshii (strain ATCC 700860 / DSM 12428 / JCM 9974 / NBRC 100139 / OT-3).